Here is a 179-residue protein sequence, read N- to C-terminus: ATP synthase subunit b (179 aa).

A helical membrane pass occupies residues 26-46; it reads FLEANLFNLAILLGIIIYYAP.

Belongs to the ATPase B chain family. F-type ATPases have 2 components, F(1) - the catalytic core - and F(0) - the membrane proton channel. F(1) has five subunits: alpha(3), beta(3), gamma(1), delta(1), epsilon(1). F(0) has four main subunits: a(1), b(1), b'(1) and c(10-14). The alpha and beta chains form an alternating ring which encloses part of the gamma chain. F(1) is attached to F(0) by a central stalk formed by the gamma and epsilon chains, while a peripheral stalk is formed by the delta, b and b' chains.

The protein localises to the cellular thylakoid membrane. F(1)F(0) ATP synthase produces ATP from ADP in the presence of a proton or sodium gradient. F-type ATPases consist of two structural domains, F(1) containing the extramembraneous catalytic core and F(0) containing the membrane proton channel, linked together by a central stalk and a peripheral stalk. During catalysis, ATP synthesis in the catalytic domain of F(1) is coupled via a rotary mechanism of the central stalk subunits to proton translocation. Functionally, component of the F(0) channel, it forms part of the peripheral stalk, linking F(1) to F(0). This Synechocystis sp. (strain ATCC 27184 / PCC 6803 / Kazusa) protein is ATP synthase subunit b.